The primary structure comprises 304 residues: Kazal-type serine protease inhibitor domain-containing protein 1 (304 aa).

The N-terminal stretch at 1–30 (MLPPPRPAAALALPVLLLLLVVLTPPPTGA) is a signal peptide. In terms of domain architecture, IGFBP N-terminal spans 49–129 (EGEGCAPCRP…EVPEPLCACR (81 aa)). 7 disulfide bridges follow: Cys-53–Cys-76, Cys-56–Cys-78, Cys-61–Cys-79, Cys-67–Cys-82, Cys-90–Cys-108, Cys-102–Cys-126, and Cys-135–Cys-168. Residues 120–170 (EVPEPLCACRSQSPLCGSDGHTYSQICRLQEAARARPDANLTVAHPGPCES) form the Kazal-like domain. 2 N-linked (GlcNAc...) asparagine glycosylation sites follow: Asn-159 and Asn-183. The 98-residue stretch at 172 to 269 (PQIVSHPYDT…GQVEAPASLT (98 aa)) folds into the Ig-like C2-type domain. Cys-193 and Cys-253 form a disulfide bridge. The N-linked (GlcNAc...) asparagine glycan is linked to Asn-277.

The protein localises to the secreted. It localises to the extracellular space. Its subcellular location is the extracellular matrix. Its function is as follows. Involved in the proliferation of osteoblasts during bone formation and bone regeneration. Promotes matrix assembly. In Homo sapiens (Human), this protein is Kazal-type serine protease inhibitor domain-containing protein 1 (KAZALD1).